The following is a 172-amino-acid chain: Type IV secretion system putative outer membrane lipoprotein BRA0058/BS1330_II0058 (172 aa).

The signal sequence occupies residues 1–15 (MRTLVMVACAVSLAA). The N-palmitoyl cysteine moiety is linked to residue Cys16. Residue Cys16 is the site of S-diacylglycerol cysteine attachment. Residues 58–172 (WPARPPKQTV…RRVDIEILRK (115 aa)) enclose the OmpA-like domain.

It localises to the cell outer membrane. Functionally, the VirB system could be required for the establishment of the replication niche in the host. The sequence is that of Type IV secretion system putative outer membrane lipoprotein BRA0058/BS1330_II0058 from Brucella suis biovar 1 (strain 1330).